Reading from the N-terminus, the 37-residue chain is Large ribosomal subunit protein bL36 (37 aa).

The protein belongs to the bacterial ribosomal protein bL36 family.

The chain is Large ribosomal subunit protein bL36 from Thioalkalivibrio sulfidiphilus (strain HL-EbGR7).